We begin with the raw amino-acid sequence, 330 residues long: ADP-L-glycero-D-manno-heptose-6-epimerase (330 aa).

NADP(+) is bound by residues 11 to 12 (FI), 32 to 33 (DD), Gln-39, Gln-54, 75 to 79 (QGACA), and Asn-92. Tyr-139 functions as the Proton acceptor in the catalytic mechanism. An NADP(+)-binding site is contributed by Lys-143. Residue Asn-168 participates in substrate binding. NADP(+) is bound by residues Val-169 and Lys-177. The active-site Proton acceptor is the Lys-177. Residues Arg-179, His-186, 200–203 (FGEH), Arg-213, and Tyr-292 each bind substrate.

It belongs to the NAD(P)-dependent epimerase/dehydratase family. HldD subfamily. As to quaternary structure, homopentamer. NADP(+) serves as cofactor.

The catalysed reaction is ADP-D-glycero-beta-D-manno-heptose = ADP-L-glycero-beta-D-manno-heptose. Its pathway is nucleotide-sugar biosynthesis; ADP-L-glycero-beta-D-manno-heptose biosynthesis; ADP-L-glycero-beta-D-manno-heptose from D-glycero-beta-D-manno-heptose 7-phosphate: step 4/4. In terms of biological role, catalyzes the interconversion between ADP-D-glycero-beta-D-manno-heptose and ADP-L-glycero-beta-D-manno-heptose via an epimerization at carbon 6 of the heptose. This Pseudomonas aeruginosa (strain UCBPP-PA14) protein is ADP-L-glycero-D-manno-heptose-6-epimerase.